Consider the following 921-residue polypeptide: Guanylate kinase-associated protein mars (921 aa).

The residue at position 49 (Ser-49) is a Phosphoserine. Thr-51 carries the post-translational modification Phosphothreonine. 2 positions are modified to phosphoserine: Ser-76 and Ser-170. Tyr-172 is modified (phosphotyrosine). Disordered regions lie at residues 179–208 (GKGKAAEPIKPSIPKPTSAAAPPSSNTVAA) and 273–325 (RPTP…PLGN). Low complexity-rich tracts occupy residues 193–208 (KPTSAAAPPSSNTVAA) and 273–285 (RPTPATVTKAKTP). At Ser-444 the chain carries Phosphoserine. A disordered region spans residues 500-531 (QTTVKEDTGDSTLVPEGTKTPPRRESNGMPNY). Phosphothreonine is present on Thr-519. A Phosphoserine modification is found at Ser-554. Disordered regions lie at residues 641–660 (AGATGKNSQPNDGSEDSKPV) and 743–763 (TKVEEPTLEDGLPATSSRHSS). Phosphoserine occurs at positions 785 and 792. Disordered regions lie at residues 809-833 (QNAAKTPPPKPRTSILKTPGTTKRQ) and 861-921 (ETVG…SEFM). Position 826 is a phosphothreonine (Thr-826). A compositionally biased stretch (polar residues) spans 878-907 (EASTESGSLEQNPGRDSNQENEATPRTYTL).

It belongs to the SAPAP family. As to expression, expressed in the central nervous system and at different stages of gametogenesis. In embryos, it is expressed in central nervous system and brain. In testis, it is strongly expressed in pre-meiotic germ cells, but is not found in somatic or post-meiotic cells.

It is found in the cell membrane. It localises to the nucleus. The protein resides in the nucleoplasm. The protein localises to the cytoplasm. Its subcellular location is the cytoskeleton. It is found in the spindle. Cell cycle regulator. The chain is Guanylate kinase-associated protein mars (mars) from Drosophila melanogaster (Fruit fly).